Reading from the N-terminus, the 254-residue chain is 5'-nucleotidase SurE (254 aa).

Residues Asp-8, Asp-9, Ser-38, and Asn-91 each contribute to the a divalent metal cation site.

The protein belongs to the SurE nucleotidase family. Requires a divalent metal cation as cofactor.

The protein localises to the cytoplasm. The enzyme catalyses a ribonucleoside 5'-phosphate + H2O = a ribonucleoside + phosphate. Its function is as follows. Nucleotidase that shows phosphatase activity on nucleoside 5'-monophosphates. The polypeptide is 5'-nucleotidase SurE (Anaeromyxobacter sp. (strain K)).